The primary structure comprises 70 residues: Gas vesicle protein A (70 aa).

Belongs to the gas vesicle GvpA family. The gas vesicle shell is 2 nm thick and consists of a single layer of this protein. It forms helical ribs nearly perpendicular to the long axis of the vesicle.

It is found in the gas vesicle shell. Gas vesicles are hollow, gas filled proteinaceous nanostructures found in some microorganisms. During planktonic growth they allow positioning of the organism at a favorable depth for light or nutrient acquisition. GvpA forms the protein shell. In Cereibacter sphaeroides (strain ATCC 17023 / DSM 158 / JCM 6121 / CCUG 31486 / LMG 2827 / NBRC 12203 / NCIMB 8253 / ATH 2.4.1.) (Rhodobacter sphaeroides), this protein is Gas vesicle protein A.